Here is a 616-residue protein sequence, read N- to C-terminus: Adenylosuccinate synthetase 2 (616 aa).

The tract at residues 1–26 is disordered; that stretch reads MDKQAERDQSAGPVKTPQETQPPAHN. Residues 17 to 26 are compositionally biased toward polar residues; it reads PQETQPPAHN. Residues 87-93 and 117-119 each bind GTP; these read GDEGKGK and GHT. The active-site Proton acceptor is D88. D88 and G117 together coordinate Mg(2+). Residues 88-91, 115-118, T202, K216, Q328, T343, and K472 each bind IMP; these read DEGK and NAGH. H118 functions as the Proton donor in the catalytic mechanism. 468–474 provides a ligand contact to substrate; the sequence is AVTKKPR. GTP-binding positions include R474 and 603 to 605; that span reads GNG.

This sequence belongs to the adenylosuccinate synthetase family. Homodimer. Mg(2+) is required as a cofactor.

It localises to the cytoplasm. It catalyses the reaction IMP + L-aspartate + GTP = N(6)-(1,2-dicarboxyethyl)-AMP + GDP + phosphate + 2 H(+). Its pathway is purine metabolism; AMP biosynthesis via de novo pathway; AMP from IMP: step 1/2. Plays an important role in the salvage pathway for purine nucleotide biosynthesis. Catalyzes the first committed step in the biosynthesis of AMP from IMP. This chain is Adenylosuccinate synthetase 2, found in Trypanosoma cruzi (strain CL Brener).